The chain runs to 996 residues: Protein psiR (996 aa).

An N-terminal signal peptide occupies residues 1–21 (MKKIILMLLLFSIFFILKSES). 9 N-linked (GlcNAc...) asparagine glycosylation sites follow: Asn-79, Asn-117, Asn-323, Asn-396, Asn-428, Asn-474, Asn-500, Asn-645, and Asn-779. A PA14 domain is found at 105-250 (QSLSNPNIYS…YDECGVCEGD (146 aa)).

Belongs to the prespore-cell-inducing factor family.

It is found in the secreted. The chain is Protein psiR (psiR) from Dictyostelium discoideum (Social amoeba).